The following is a 310-amino-acid chain: Oxygen-dependent coproporphyrinogen-III oxidase (310 aa).

A substrate-binding site is contributed by serine 97. A divalent metal cation-binding residues include histidine 101 and histidine 111. Histidine 111 functions as the Proton donor in the catalytic mechanism. 113–115 (NFR) is a substrate binding site. Residues histidine 150 and histidine 180 each coordinate a divalent metal cation. Positions 245–280 (YVEFNLLYDRGTRFGLEFGGRTESILMSLPPRVVWR) are important for dimerization. 263-265 (GGR) is a binding site for substrate.

This sequence belongs to the aerobic coproporphyrinogen-III oxidase family. Homodimer. A divalent metal cation serves as cofactor.

The protein resides in the cytoplasm. The enzyme catalyses coproporphyrinogen III + O2 + 2 H(+) = protoporphyrinogen IX + 2 CO2 + 2 H2O. The protein operates within porphyrin-containing compound metabolism; protoporphyrin-IX biosynthesis; protoporphyrinogen-IX from coproporphyrinogen-III (O2 route): step 1/1. Functionally, involved in the heme biosynthesis. Catalyzes the aerobic oxidative decarboxylation of propionate groups of rings A and B of coproporphyrinogen-III to yield the vinyl groups in protoporphyrinogen-IX. The protein is Oxygen-dependent coproporphyrinogen-III oxidase of Coxiella burnetii (strain Dugway 5J108-111).